Reading from the N-terminus, the 338-residue chain is MFQAFPGDYDSGSRCSSSPSAESQYLSSVDSFGSPPTAAASQECAGLGEMPGSFVPTVTAITTSQDLQWLVQPTLISSMAQSQGQPLASQPPAVDPYDMPGTSYSTPGLSAYSTGGASGSGGPSTSTTTSGPVSARPARARPRRPREETLTPEEEEKRRVRRERNKLAAAKCRNRRRELTDRLQAETDQLEEEKAELESEIAELQKEKERLEFVLVAHKPGCKIPYEEGPGPGPLAEVRDLPGSTSAKEDGFGWLLPPPPPPPLPFQSSRDAPPNLTASLFTHSEVQVLGDPFPVVSPSYTSSFVLTCPEVSAFAGAQRTSGSEQPSDPLNSPSLLAL.

2 disordered regions span residues 1–54 and 80–179; these read MFQA…PGSF and AQSQ…RREL. 2 stretches are compositionally biased toward polar residues: residues 13–31 and 102–112; these read SRCS…SVDS and TSYSTPGLSAY. Ser-27 bears the Phosphoserine mark. Low complexity predominate over residues 123–137; that stretch reads PSTSTTTSGPVSARP. In terms of domain architecture, bZIP spans 155–218; sequence EEKRRVRRER…ERLEFVLVAH (64 aa). Residues 157-182 form a basic motif region; sequence KRRVRRERNKLAAAKCRNRRRELTDR. A leucine-zipper region spans residues 183–211; it reads LQAETDQLEEEKAELESEIAELQKEKERL. 2 disordered regions span residues 222 to 276 and 316 to 338; these read CKIP…PPNL and GAQR…LLAL. Positions 256–265 are enriched in pro residues; sequence LPPPPPPPLP. 2 stretches are compositionally biased toward polar residues: residues 266-276 and 318-338; these read FQSSRDAPPNL and QRTS…LLAL.

The protein belongs to the bZIP family. Fos subfamily. In terms of assembly, heterodimer; binds to DNA as heterodimer. Component of an AP-1 transcription factor complex; composed of FOS-JUN heterodimers. As part of the AP-1 transcription factor complex, forms heterodimers with JUN, JUNB or JUND, thereby binding to the AP-1 consensus sequence and stimulating transcription. Interacts with the BAF multiprotein chromatin-remodeling complex subunits SMARCB1 and SMARCD1. Interacts with ARID1A and JUN. As to quaternary structure, homodimer under oxidizing conditions and monomer under reducing conditions (in vitro). Heterodimer; binds to DNA as heterodimer. Forms heterodimers with JUNB, JUN or JUND; thereby binding to the AP-1 consensus sequence but does not stimulate transcription. Forms heterodimers with JUND under oxidizing conditions. Post-translationally, phosphorylated. In terms of processing, phosphorylated at Ser-27 by CSNK2A1; phosphorylation increases protein stability and transactivation potential. In terms of tissue distribution, expressed in brain, including the preoptic area of the hypothalamus, the main and accessory olfactory bulbs, the pyriform cortex and the hippocampus (at protein level). Expressed in the neurons of the subgranular zone of the dentate gyrus in the hippocampus (at protein level). Expressed in pyramidal cells in CA1 and CA3, in the dentate gyrus and the nucleus accumbens of the striatum (at protein level). As to expression, expressed in the core and shell of the nucleus accumbens of the striatum (at protein level). Expressed in the neurons of the subgranular zone of the dentate gyrus in the hippocampus (at protein level).

It is found in the nucleus. Functionally, heterodimerizes with proteins of the JUN family to form an AP-1 transcription factor complex, thereby enhancing their DNA binding activity to gene promoters containing an AP-1 consensus sequence 5'-TGA[GC]TCA-3' and enhancing their transcriptional activity. As part of the AP-1 complex, facilitates enhancer selection together with cell-type-specific transcription factors by collaboratively binding to nucleosomal enhancers and recruiting the SWI/SNF (BAF) chromatin remodeling complex to establish accessible chromatin. Together with JUN, plays a role in activation-induced cell death of T cells by binding to the AP-1 promoter site of FASLG/CD95L, and inducing its transcription in response to activation of the TCR/CD3 signaling pathway. Exhibits transactivation activity in vitro. Involved in the display of nurturing behavior towards newborns. May play a role in neurogenesis in the hippocampus and in learning and memory-related tasks by regulating the expression of various genes involved in neurogenesis, depression and epilepsy. Implicated in behavioral responses related to morphine reward and spatial memory. Exhibits lower transactivation activity than isoform 1 in vitro. The heterodimer with JUN does not display any transcriptional activity, and may thereby act as an transcriptional inhibitor. May be involved in the regulation of neurogenesis in the hippocampus. May play a role in synaptic modifications in nucleus accumbens medium spiny neurons and thereby play a role in adaptive and pathological reward-dependent learning, including maladaptive responses involved in drug addiction. Seems to be more stably expressed with a half-life of ~9.5 hours in cell culture as compared to 1.5 hours half-life of isoform 1. The protein is Protein FosB of Mus musculus (Mouse).